The sequence spans 333 residues: Cell shape-determining protein Mbl (333 aa).

ATP-binding positions include 12–14 (TAN), 156–158 (GGT), 204–207 (EDIK), and 284–287 (GGAL).

It belongs to the FtsA/MreB family. As to quaternary structure, forms polymers. Forms a complex with MreB and MreBH. Interacts with MreC.

It is found in the cytoplasm. Its function is as follows. Forms membrane-associated dynamic filaments that are essential for cell shape determination. Acts by regulating cell wall synthesis and cell elongation, and thus cell shape. A feedback loop between cell geometry and Mbl localization may maintain elongated cell shape by targeting cell wall growth to regions of negative cell wall curvature. Filaments rotate around the cell circumference in concert with the cell wall synthesis enzymes. The process is driven by the cell wall synthesis machinery and does not depend on Mbl polymerization. Organizes peptidoglycan synthesis in the lateral cell wall. Also required for proper chromosome segregation. The sequence is that of Cell shape-determining protein Mbl (mbl) from Bacillus subtilis (strain 168).